Consider the following 132-residue polypeptide: Small ribosomal subunit protein uS8 (132 aa).

This sequence belongs to the universal ribosomal protein uS8 family. In terms of assembly, part of the 30S ribosomal subunit. Contacts proteins S5 and S12.

Functionally, one of the primary rRNA binding proteins, it binds directly to 16S rRNA central domain where it helps coordinate assembly of the platform of the 30S subunit. The protein is Small ribosomal subunit protein uS8 of Ehrlichia ruminantium (strain Welgevonden).